The chain runs to 217 residues: Adenylate kinase (217 aa).

An ATP-binding site is contributed by 10-15; the sequence is GAGKGT. The interval 30–59 is NMP; it reads STGDMLRAAVKAGTEMGLAAKKVMDAGGLV. AMP contacts are provided by residues T31, R36, 57–59, 85–88, and Q92; these read GLV and GFPR. The interval 122–159 is LID; it reads GRRSHPASGRTYHVKFNPPKVDGVDDVTGEPLVQRDDD. Residues R123 and 132–133 each bind ATP; that span reads TY. Positions 156 and 167 each coordinate AMP. Residue G203 participates in ATP binding.

It belongs to the adenylate kinase family. In terms of assembly, monomer.

It localises to the cytoplasm. The catalysed reaction is AMP + ATP = 2 ADP. The protein operates within purine metabolism; AMP biosynthesis via salvage pathway; AMP from ADP: step 1/1. In terms of biological role, catalyzes the reversible transfer of the terminal phosphate group between ATP and AMP. Plays an important role in cellular energy homeostasis and in adenine nucleotide metabolism. The chain is Adenylate kinase from Leptothrix cholodnii (strain ATCC 51168 / LMG 8142 / SP-6) (Leptothrix discophora (strain SP-6)).